Consider the following 29-residue polypeptide: Varv peptide A (29 aa).

Residues 1-29 (GLPVCGETCVGGTCNTPGCSCSWPVCTRN) constitute a cross-link (cyclopeptide (Gly-Asn)). Intrachain disulfides connect Cys5–Cys19, Cys9–Cys21, and Cys14–Cys26.

Post-translationally, this is a cyclic peptide.

Its function is as follows. Probably participates in a plant defense mechanism. Has cytotoxic activity against a variety of drug-resistant and drug-sensitive human tumor cell lines, and against primary chronic lymphocytic leukemia cells. Has weak cytotoxic activity against primary ovarian carcinoma cells or normal lymphocytes. The sequence is that of Varv peptide A from Viola arvensis (European field pansy).